We begin with the raw amino-acid sequence, 390 residues long: Stearoyl-[acyl-carrier-protein] 9-desaturase 5, chloroplastic (390 aa).

The disordered stretch occupies residues 1–22 (MAFAASHTASPSSCGGVAQRRS). The N-terminal 31 residues, 1 to 31 (MAFAASHTASPSSCGGVAQRRSNGMSPVVAM), are a transit peptide targeting the chloroplast. Glu132, Glu170, His173, Glu223, Glu256, and His259 together coordinate Fe cation.

It belongs to the fatty acid desaturase type 2 family. In terms of assembly, homodimer. The cofactor is Fe(2+).

It localises to the plastid. It is found in the chloroplast. The catalysed reaction is octadecanoyl-[ACP] + 2 reduced [2Fe-2S]-[ferredoxin] + O2 + 2 H(+) = (9Z)-octadecenoyl-[ACP] + 2 oxidized [2Fe-2S]-[ferredoxin] + 2 H2O. It participates in lipid metabolism; fatty acid metabolism. Functionally, converts stearoyl-ACP to oleoyl-ACP by introduction of a cis double bond between carbons 9 and 10 of the acyl chain. In Oryza sativa subsp. japonica (Rice), this protein is Stearoyl-[acyl-carrier-protein] 9-desaturase 5, chloroplastic.